Consider the following 245-residue polypeptide: 2,3-bisphosphoglycerate-dependent phosphoglycerate mutase (245 aa).

Substrate-binding positions include 8–15, 21–22, Arg60, 87–90, Lys98, 114–115, and 183–184; these read RHGQSLWN, TG, ERHY, RR, and GN. Residue His9 is the Tele-phosphohistidine intermediate of the active site. Glu87 (proton donor/acceptor) is an active-site residue.

Belongs to the phosphoglycerate mutase family. BPG-dependent PGAM subfamily.

The enzyme catalyses (2R)-2-phosphoglycerate = (2R)-3-phosphoglycerate. The protein operates within carbohydrate degradation; glycolysis; pyruvate from D-glyceraldehyde 3-phosphate: step 3/5. Catalyzes the interconversion of 2-phosphoglycerate and 3-phosphoglycerate. This Bacillus thuringiensis subsp. konkukian (strain 97-27) protein is 2,3-bisphosphoglycerate-dependent phosphoglycerate mutase.